We begin with the raw amino-acid sequence, 295 residues long: Indole-3-glycerol phosphate synthase (295 aa).

The protein belongs to the TrpC family.

The enzyme catalyses 1-(2-carboxyphenylamino)-1-deoxy-D-ribulose 5-phosphate + H(+) = (1S,2R)-1-C-(indol-3-yl)glycerol 3-phosphate + CO2 + H2O. Its pathway is amino-acid biosynthesis; L-tryptophan biosynthesis; L-tryptophan from chorismate: step 4/5. The chain is Indole-3-glycerol phosphate synthase from Prochlorococcus marinus (strain MIT 9211).